A 576-amino-acid chain; its full sequence is Rho GTPase-activating protein gacP (576 aa).

The stretch at 123 to 189 (LKSIIKTELK…RTNFERVGID (67 aa)) forms a coiled coil. Residues 277–462 (EDLSVLLNRE…TIIQNFDRIF (186 aa)) form the Rho-GAP domain. The interval 472–576 (VPDTYVPPPN…DEGDAVELSD (105 aa)) is disordered. The segment covering 482–500 (NTRNNSVNNFNNVQPSSFS) has biased composition (low complexity). Residues 501 to 513 (ASTSRSINLNKST) show a composition bias toward polar residues. The segment covering 514 to 530 (NNPNINDDNNNNNNINN) has biased composition (low complexity). The span at 565–576 (SFDEGDAVELSD) shows a compositional bias: acidic residues.

The protein resides in the cytoplasm. In terms of biological role, rho GTPase-activating protein involved in the signal transduction pathway. In Dictyostelium discoideum (Social amoeba), this protein is Rho GTPase-activating protein gacP (gacP).